A 135-amino-acid chain; its full sequence is ATP synthase epsilon chain (135 aa).

This sequence belongs to the ATPase epsilon chain family. As to quaternary structure, F-type ATPases have 2 components, CF(1) - the catalytic core - and CF(0) - the membrane proton channel. CF(1) has five subunits: alpha(3), beta(3), gamma(1), delta(1), epsilon(1). CF(0) has three main subunits: a, b and c.

It is found in the cell inner membrane. Its function is as follows. Produces ATP from ADP in the presence of a proton gradient across the membrane. This Rhizobium etli (strain CIAT 652) protein is ATP synthase epsilon chain.